The chain runs to 465 residues: MPYLMRLALVLFCLMALVESRKPRRKRWTGLLETSKPSHLYKKNLDVTKMRPGKPRPLLRVEDHDFTMRPAFGGPAIPVGVDVQVESLDSISEVDMDFTMTLYLRHYWRDERLAFPSSSNKSMTFDGRLVKKIWVPDVFFVHSKRSFIHDTTTDNIMLRVFPDGHVLYSMRITVTAMCNMDFSHFPLDSQTCSLELESYAYTDEDLMLYWKNGDESLKTDEKISLSQFLIQKFHTTSRLAFYSSTGWYNRLYINFTLRRHIFFFLLQTYFPATLMVMLSWVSFWIDHRAVPARVSLGIMTVLTMSTIITGVNASMPRVSYIRAVDIYLWVSFVFVFLSVLEYAAVNYLTTLQEQKERKFREKLPCMCGMLHSRTMMLDGSYSESEANSLAGYPRSHILPEEERPDNIVVHLALNSELTSSRKKGLLKGQMGLYIFQNTHAIDKYSRLIFPAFYIVFNLIYWSVFS.

Positions 1 to 20 (MPYLMRLALVLFCLMALVES) are cleaved as a signal peptide. The Extracellular segment spans residues 21-260 (RKPRRKRWTG…LYINFTLRRH (240 aa)). Arg105 serves as a coordination point for 4-aminobutanoate. A glycan (N-linked (GlcNAc...) asparagine) is linked at Asn120. A 4-aminobutanoate-binding site is contributed by Ser169. A disulfide bridge links Cys178 with Cys192. Glu197 is a binding site for 4-aminobutanoate. Asn254 carries an N-linked (GlcNAc...) asparagine glycan. The chain crosses the membrane as a helical span at residues 261–281 (IFFFLLQTYFPATLMVMLSWV). Residues 282–293 (SFWIDHRAVPAR) are Cytoplasmic-facing. The chain crosses the membrane as a helical span at residues 294–314 (VSLGIMTVLTMSTIITGVNAS). Topologically, residues 315–325 (MPRVSYIRAVD) are extracellular. A helical membrane pass occupies residues 326–346 (IYLWVSFVFVFLSVLEYAAVN). Over 347–443 (YLTTLQEQKE…IFQNTHAIDK (97 aa)) the chain is Cytoplasmic. The chain crosses the membrane as a helical span at residues 444-464 (YSRLIFPAFYIVFNLIYWSVF). Residue Ser465 is a topological domain, extracellular.

The protein belongs to the ligand-gated ion channel (TC 1.A.9) family. Gamma-aminobutyric acid receptor (TC 1.A.9.5) subfamily. GABRR2 sub-subfamily. As to quaternary structure, three rho subunits (rho-1/GBRR1, rho-2/GBRR2 and rho-3/GBRR3) coassemble either to form functional homopentamers or heteropentamers. Rho-2 is unable to form a functional homopentamer. Interacts with SQSTM1. In terms of tissue distribution, expressed in the cerebellum.

It localises to the postsynaptic cell membrane. The protein localises to the cell membrane. It catalyses the reaction chloride(in) = chloride(out). Its function is as follows. Rho subunit of the pentameric ligand-gated chloride channels responsible for mediating the effects of gamma-aminobutyric acid (GABA), the major inhibitory neurotransmitter in the brain. Rho-containing GABA-gated chloride channels are a subclass of GABA(A) receptors (GABAARs) entirely composed of rho subunits, where GABA molecules bind at the rho intersubunit interfaces. When activated by GABA, rho-GABAARs selectively allow the flow of chloride anions across the cell membrane down their electrochemical gradient. Rho-2 GABAARs may contribute to the regulation of glial development in the cerebellum by controlling extrasynaptic transmission. Rho-2 GABAARs are also involved in neuronal tonic (extrasynaptic) and phasic (synaptic) transmission in the Purkinje neurons of the cerebellum. Rho-2 GABAARs expressed in retina may play a role in retinal neurotransmission. The protein is Gamma-aminobutyric acid receptor subunit rho-2 of Mus musculus (Mouse).